The chain runs to 251 residues: 1-(5-phosphoribosyl)-5-[(5-phosphoribosylamino)methylideneamino] imidazole-4-carboxamide isomerase (251 aa).

Aspartate 8 serves as the catalytic Proton acceptor. Aspartate 131 (proton donor) is an active-site residue.

The protein belongs to the HisA/HisF family.

The protein localises to the cytoplasm. The catalysed reaction is 1-(5-phospho-beta-D-ribosyl)-5-[(5-phospho-beta-D-ribosylamino)methylideneamino]imidazole-4-carboxamide = 5-[(5-phospho-1-deoxy-D-ribulos-1-ylimino)methylamino]-1-(5-phospho-beta-D-ribosyl)imidazole-4-carboxamide. It participates in amino-acid biosynthesis; L-histidine biosynthesis; L-histidine from 5-phospho-alpha-D-ribose 1-diphosphate: step 4/9. The polypeptide is 1-(5-phosphoribosyl)-5-[(5-phosphoribosylamino)methylideneamino] imidazole-4-carboxamide isomerase (Burkholderia thailandensis (strain ATCC 700388 / DSM 13276 / CCUG 48851 / CIP 106301 / E264)).